The primary structure comprises 122 residues: Small ribosomal subunit protein uS13 (122 aa).

Positions 99 to 122 (RGQRTHTNARTRKGPAKAIAGKKK) are disordered.

The protein belongs to the universal ribosomal protein uS13 family. In terms of assembly, part of the 30S ribosomal subunit. Forms a loose heterodimer with protein S19. Forms two bridges to the 50S subunit in the 70S ribosome.

Functionally, located at the top of the head of the 30S subunit, it contacts several helices of the 16S rRNA. In the 70S ribosome it contacts the 23S rRNA (bridge B1a) and protein L5 of the 50S subunit (bridge B1b), connecting the 2 subunits; these bridges are implicated in subunit movement. Contacts the tRNAs in the A and P-sites. This Bradyrhizobium sp. (strain ORS 278) protein is Small ribosomal subunit protein uS13.